The sequence spans 378 residues: Chaperone protein DnaJ (378 aa).

In terms of domain architecture, J spans 5 to 70; it reads DYYEVLGVAK…QKRAAYDQYG (66 aa). A CR-type zinc finger spans residues 138–216; that stretch reads GYDTQIRVPS…CHGSGKVKET (79 aa). Zn(2+) is bound by residues C151, C154, C168, C171, C190, C193, C204, and C207. CXXCXGXG motif repeat units follow at residues 151–158, 168–175, 190–197, and 204–211; these read CEVCHGSG, CPTCHGQG, CPKCHGTG, and CVHCHGSG.

The protein belongs to the DnaJ family. Homodimer. Zn(2+) serves as cofactor.

The protein resides in the cytoplasm. Participates actively in the response to hyperosmotic and heat shock by preventing the aggregation of stress-denatured proteins and by disaggregating proteins, also in an autonomous, DnaK-independent fashion. Unfolded proteins bind initially to DnaJ; upon interaction with the DnaJ-bound protein, DnaK hydrolyzes its bound ATP, resulting in the formation of a stable complex. GrpE releases ADP from DnaK; ATP binding to DnaK triggers the release of the substrate protein, thus completing the reaction cycle. Several rounds of ATP-dependent interactions between DnaJ, DnaK and GrpE are required for fully efficient folding. Also involved, together with DnaK and GrpE, in the DNA replication of plasmids through activation of initiation proteins. This chain is Chaperone protein DnaJ, found in Burkholderia lata (strain ATCC 17760 / DSM 23089 / LMG 22485 / NCIMB 9086 / R18194 / 383).